Here is a 540-residue protein sequence, read N- to C-terminus: Chaperonin GroEL (540 aa).

Residues 29-32 (TLGP), 86-90 (DGTTT), G413, 476-478 (NAA), and D492 contribute to the ATP site.

Belongs to the chaperonin (HSP60) family. Forms a cylinder of 14 subunits composed of two heptameric rings stacked back-to-back. Interacts with the co-chaperonin GroES.

It is found in the cytoplasm. It catalyses the reaction ATP + H2O + a folded polypeptide = ADP + phosphate + an unfolded polypeptide.. Functionally, together with its co-chaperonin GroES, plays an essential role in assisting protein folding. The GroEL-GroES system forms a nano-cage that allows encapsulation of the non-native substrate proteins and provides a physical environment optimized to promote and accelerate protein folding. This is Chaperonin GroEL from Streptococcus gordonii.